Reading from the N-terminus, the 945-residue chain is Bifunctional glutamine synthetase adenylyltransferase/adenylyl-removing enzyme (945 aa).

The interval 1–441 (MLPLSAALQT…VFNDLIGDDS (441 aa)) is adenylyl removase. The tract at residues 450–945 (YQHYHSLWQD…VRASWAKWLG (496 aa)) is adenylyl transferase.

The protein belongs to the GlnE family. Requires Mg(2+) as cofactor.

It carries out the reaction [glutamine synthetase]-O(4)-(5'-adenylyl)-L-tyrosine + phosphate = [glutamine synthetase]-L-tyrosine + ADP. It catalyses the reaction [glutamine synthetase]-L-tyrosine + ATP = [glutamine synthetase]-O(4)-(5'-adenylyl)-L-tyrosine + diphosphate. Its function is as follows. Involved in the regulation of glutamine synthetase GlnA, a key enzyme in the process to assimilate ammonia. When cellular nitrogen levels are high, the C-terminal adenylyl transferase (AT) inactivates GlnA by covalent transfer of an adenylyl group from ATP to specific tyrosine residue of GlnA, thus reducing its activity. Conversely, when nitrogen levels are low, the N-terminal adenylyl removase (AR) activates GlnA by removing the adenylyl group by phosphorolysis, increasing its activity. The regulatory region of GlnE binds the signal transduction protein PII (GlnB) which indicates the nitrogen status of the cell. The protein is Bifunctional glutamine synthetase adenylyltransferase/adenylyl-removing enzyme of Serratia proteamaculans (strain 568).